The chain runs to 377 residues: O-phospho-L-seryl-tRNA:Cys-tRNA synthase (377 aa).

Residues 82–83, Asn-189, and 212–214 each bind pyridoxal 5'-phosphate; these read AR and SGH. Lys-215 is modified (N6-(pyridoxal phosphate)lysine).

The protein belongs to the SepCysS family. In terms of assembly, homodimer. Interacts with SepRS. Pyridoxal 5'-phosphate is required as a cofactor.

It catalyses the reaction O-phospho-L-seryl-tRNA(Cys) + hydrogen sulfide + H(+) = L-cysteinyl-tRNA(Cys) + phosphate. Its function is as follows. Converts O-phospho-L-seryl-tRNA(Cys) (Sep-tRNA(Cys)) to L-cysteinyl-tRNA(Cys) (Cys-tRNA(Cys)). The sequence is that of O-phospho-L-seryl-tRNA:Cys-tRNA synthase from Methanocaldococcus jannaschii (strain ATCC 43067 / DSM 2661 / JAL-1 / JCM 10045 / NBRC 100440) (Methanococcus jannaschii).